The sequence spans 847 residues: Follistatin-related protein 5 (847 aa).

An N-terminal signal peptide occupies residues 1–20 (MFRCWSAILILGFIFLASEG). Residues 81-135 (ETRHAECACMDLCKQHYKPVCGSDGEFYENHCEVHRAACLKKQKITIVHNEDCFF) form the Kazal-like domain. Intrachain disulfides connect cysteine 87/cysteine 119, cysteine 93/cysteine 112, and cysteine 101/cysteine 133. 2 consecutive EF-hand domains span residues 175–210 (RKKPLVDQMFKYFDADSNGLVDINELTQVIKQEELN) and 211–246 (KDLSDCTLYDLLKYDDFNADKHLALEEFYRAFQVIQ). The Ca(2+) site is built by aspartate 188, aspartate 190, asparagine 192, glutamate 199, aspartate 226, asparagine 228, aspartate 230, histidine 232, and glutamate 237. 2 Ig-like domains span residues 250 to 338 (PEDQ…FQVN) and 341 to 426 (PVIR…EDIS). Disulfide bonds link cysteine 270–cysteine 321 and cysteine 362–cysteine 413. 2 N-linked (GlcNAc...) asparagine glycosylation sites follow: asparagine 318 and asparagine 394.

It localises to the secreted. The polypeptide is Follistatin-related protein 5 (Fstl5) (Mus musculus (Mouse)).